A 716-amino-acid chain; its full sequence is DEAD-box ATP-dependent RNA helicase 31 (716 aa).

The tract at residues 99-188 (GILKSDDEDE…LRLEDESSDE (90 aa)) is disordered. Over residues 110–121 (DRSRGRNQEKRG) the composition is skewed to basic and acidic residues. The span at 144-153 (SRIQGKSSEA) shows a compositional bias: polar residues. Residues 155–188 (FRGRKETSFSRDREDEKGLRKREDLRLEDESSDE) are compositionally biased toward basic and acidic residues. Residues 248-276 (TRFDHYPLSPLSLKAIKDAGYETMTVVQE) carry the Q motif motif. The 184-residue stretch at 279-462 (LPIILKGKDV…LVALRRDHEF (184 aa)) folds into the Helicase ATP-binding domain. An ATP-binding site is contributed by 292 to 299 (AKTGTGKT). Residues 410-413 (DEAD) carry the DEAD box motif. A Helicase C-terminal domain is found at 497 to 643 (LREHIMGNVD…IDPETVKKVQ (147 aa)).

This sequence belongs to the DEAD box helicase family.

The enzyme catalyses ATP + H2O = ADP + phosphate + H(+). The protein is DEAD-box ATP-dependent RNA helicase 31 (RH31) of Arabidopsis thaliana (Mouse-ear cress).